The following is a 319-amino-acid chain: High-affinity zinc uptake system protein ZnuA (319 aa).

The N-terminal stretch at 1–20 is a signal peptide; the sequence is MFKKWSGLFVIAACFLLVAA. Cys21 carries the N-palmitoyl cysteine lipid modification. Cys21 carries S-diacylglycerol cysteine lipidation. 4 residues coordinate Zn(2+): His71, His148, His212, and Glu287.

This sequence belongs to the bacterial solute-binding protein 9 family. As to quaternary structure, the complex is composed of two ATP-binding proteins (ZnuC), two transmembrane proteins (ZnuB) and a solute-binding protein (ZnuA).

The protein localises to the cell membrane. Its subcellular location is the membrane raft. Its function is as follows. Part of the ATP-binding cassette (ABC) transport system ZnuABC involved in zinc import. Binds zinc with high affinity and specificity and delivers it to the membrane permease for translocation into the cytoplasm. ZnuABC-mediated zinc transport is required for comF expression and competence development. The polypeptide is High-affinity zinc uptake system protein ZnuA (znuA) (Bacillus subtilis (strain 168)).